Consider the following 377-residue polypeptide: MITHFCELAAHRNYVLALYRHSLRNVSRINSGFVKHKMKKVITNEARKHKNDKSSWSIYRRLKELKLLSDKLEDDQVNDAYNLLDSFMKSVKKPKNELKGHLMKIRTEIETNKNIQDKTRLTRLNLLHRYIAKKQQNQLLTKHIPDEYKEKLLLPLALHEKGILRLAAIRNQFKKGGYHAKLSFTMAGKTRIWFIRSMLNKRKKQSLRLRNLITSEKRRYLEVCKIVESLNENANWALHEAIWERYLDDGYLHATSSKGYLKMVEIEDNSVKLQNQNDSKVVKCQRLQQWLSPIQSSILSLENYLNQRQMKYAKLKTKILEPKGVYDYYQKKSKRVFQNHMKTYKRMVKNELPFVNPFIERLSIGSILKRNGINVKY.

It belongs to the RRG1 family.

The protein localises to the mitochondrion. Its function is as follows. Essential for respiratory growth and required for mitochondrial protein synthesis. Required for vacuolar acidification. This is Required for respiratory growth protein 1, mitochondrial (RRG1) from Candida glabrata (strain ATCC 2001 / BCRC 20586 / JCM 3761 / NBRC 0622 / NRRL Y-65 / CBS 138) (Yeast).